A 366-amino-acid chain; its full sequence is Aminomethyltransferase (366 aa).

It belongs to the GcvT family. The glycine cleavage system is composed of four proteins: P, T, L and H.

It carries out the reaction N(6)-[(R)-S(8)-aminomethyldihydrolipoyl]-L-lysyl-[protein] + (6S)-5,6,7,8-tetrahydrofolate = N(6)-[(R)-dihydrolipoyl]-L-lysyl-[protein] + (6R)-5,10-methylene-5,6,7,8-tetrahydrofolate + NH4(+). Functionally, the glycine cleavage system catalyzes the degradation of glycine. The sequence is that of Aminomethyltransferase from Neisseria meningitidis serogroup A / serotype 4A (strain DSM 15465 / Z2491).